A 1400-amino-acid polypeptide reads, in one-letter code: Tiny macrocysts protein C (1400 aa).

8 helical membrane-spanning segments follow: residues 59–79 (ILTIISLLIEFCQLSSFGFKQ), 112–132 (IFFWIVIGLLLLGFFNIWYVA), 152–172 (FVSTTVAVLFIPIISLLLIGL), 196–216 (ANLSIAIVSIILIIVFSIVGF), 240–260 (FDVYILFVKLILALLNSLVDF), 266–286 (SIVYFILSITLVFGSIIILPY), 296–316 (SGFYTTVFWVSFMTLVTMGIN), and 320–340 (TATTCYITIVGAFFAFPIGYF). Disordered regions lie at residues 367-393 (FNEITKNEKSKTGDSKEKESSSPSKVT) and 683-712 (ERSGSKSGSSKSKDDSSESSSSSKGRRGKY). Residues 369–386 (EITKNEKSKTGDSKEKES) are compositionally biased toward basic and acidic residues. 4 helical membrane passes run 726–746 (WLMIGTTACCIIFLIVMLIVL), 975–995 (TMLYVWVAIFCFLIILGAVLF), 1162–1182 (VLAIFLLFGFITMGLWVTYSV), and 1342–1362 (VLTSVLAISCVLLLVIHLLLF).

The protein resides in the membrane. This Dictyostelium discoideum (Social amoeba) protein is Tiny macrocysts protein C (tmcC).